The primary structure comprises 207 residues: Histone H1 (207 aa).

Low complexity predominate over residues 1–15 (MAEVAPAPAAAAPAK). Disordered regions lie at residues 1-28 (MAEVAPAPAAAAPAKAPKKKAAAKPKKA) and 105-207 (EAKK…PKKK). An N-acetylalanine modification is found at Ala2. Residues 16-27 (APKKKAAAKPKK) show a composition bias toward basic residues. The H15 domain occupies 28–101 (AGPSVGELIV…GASGSFKLNK (74 aa)). 2 stretches are compositionally biased toward basic residues: residues 117–168 (KAKK…KVKK) and 175–207 (KAAKSPKKATKAAKPKAAKPKAAKAKKAAPKKK).

This sequence belongs to the histone H1/H5 family. As to expression, oncorhyncin II is expressed in skin.

The protein resides in the nucleus. It is found in the chromosome. The protein localises to the secreted. Histones H1 are necessary for the condensation of nucleosome chains into higher-order structures. Functionally, oncorhyncin II has antibacterial activity against Gram-positive and Gram-negative bacteria at submicromolar concentrations. Potentially important role in mucosal defense. In Oncorhynchus mykiss (Rainbow trout), this protein is Histone H1.